A 123-amino-acid polypeptide reads, in one-letter code: Large ribosomal subunit protein uL14 (123 aa).

This sequence belongs to the universal ribosomal protein uL14 family. In terms of assembly, part of the 50S ribosomal subunit. Forms a cluster with proteins L3 and L19. In the 70S ribosome, L14 and L19 interact and together make contacts with the 16S rRNA in bridges B5 and B8.

Binds to 23S rRNA. Forms part of two intersubunit bridges in the 70S ribosome. In Corynebacterium urealyticum (strain ATCC 43042 / DSM 7109), this protein is Large ribosomal subunit protein uL14.